We begin with the raw amino-acid sequence, 453 residues long: Pup--protein ligase (453 aa).

Glu-9 lines the Mg(2+) pocket. Arg-53 is a binding site for ATP. A Mg(2+)-binding site is contributed by Tyr-55. Asp-57 acts as the Proton acceptor in catalysis. Glu-63 contributes to the Mg(2+) binding site. Residues Thr-66 and Trp-420 each coordinate ATP.

The protein belongs to the Pup ligase/Pup deamidase family. Pup-conjugating enzyme subfamily.

It catalyses the reaction ATP + [prokaryotic ubiquitin-like protein]-L-glutamate + [protein]-L-lysine = ADP + phosphate + N(6)-([prokaryotic ubiquitin-like protein]-gamma-L-glutamyl)-[protein]-L-lysine.. The protein operates within protein degradation; proteasomal Pup-dependent pathway. Its pathway is protein modification; protein pupylation. Catalyzes the covalent attachment of the prokaryotic ubiquitin-like protein modifier Pup to the proteasomal substrate proteins, thereby targeting them for proteasomal degradation. This tagging system is termed pupylation. The ligation reaction involves the side-chain carboxylate of the C-terminal glutamate of Pup and the side-chain amino group of a substrate lysine. The sequence is that of Pup--protein ligase from Streptomyces scabiei (strain 87.22).